The following is a 3461-amino-acid chain: Abnormal spindle-like microcephaly-associated protein homolog (3461 aa).

The segment at 1-30 is disordered; the sequence is MATRRAGRSWEVSPTERRPSARPRNSAAEE. Phosphoserine is present on residues Ser-279, Ser-282, Ser-367, Ser-392, Ser-426, and Ser-606. Residues 921–1057 enclose the Calponin-homology (CH) 1 domain; it reads KTSKEILLAF…LLWKIAFAFQ (137 aa). A coiled-coil region spans residues 1058 to 1077; sequence VDISLNLDQLKEEIDFLKHT. Ser-1104 bears the Phosphoserine mark. In terms of domain architecture, Calponin-homology (CH) 2 spans 1111–1262; sequence SESIKLLMDW…YLSFLCARLL (152 aa). IQ domains lie at 1267–1296, 1348–1379, 1488–1517, 1511–1540, 1538–1569, 1583–1614, 1633–1662, 1656–1685, 1729–1758, 1752–1783, 1775–1804, 1802–1831, 1825–1854, 1875–1904, 1898–1929, 1948–1979, 1971–2002, 2021–2050, 2044–2075, 2094–2125, 2117–2148, 2167–2198, 2190–2219, 2240–2271, 2313–2344, 2336–2367, 2386–2417, 2409–2440, 2459–2490, 2532–2563, 2666–2697, 2689–2720, 2739–2768, 2837–2866, 2860–2891, 2910–2939, 2933–2964, 2955–2986, 3030–3059, 3080–3111, 3182–3211, and 3205–3236; these read ETRAARLIQTTWRKYKQKTDLKRHQERDKA, QNKSALVIQRYWRRYSTRKQFLKLKYYSVILQ, LRSCVVIIQTRFRCLQAQKSYKRRREAILT, RREAILTIQKFYRAHLKGKTERANYLQKRA, KRAAAIQLQAAFRGMKARNLHRQIRAACVFQS, LKKITIKLQAQVRMHQQLQKYKKIKKAALIIQ, TRSAVIVLQSAYRGMQARRKFIHILTSIIK, ILTSIIKIQSYYRAYISRKKFLRLKHATVK, MRESCIKLQAFVRGHLVRKQMRSQRKAAVS, QRKAAVSLQSYFRMRKMRQHYLEMYKAAVVIQ, MYKAAVVIQNYYRAYKAQVSQRKNFLQVKR, VKRAVTCVQAAYRGYKVRQLIKQQSIAALK, QSIAALKIQTAFRGYSKRKKYQYVLQSTIK, TKAAVISLQSAYRGWKVRTQIRRELQAAVR, ELQAAVRIQSAFRMAQTQKQFRLFKTAALVIQ, LRNAALMLQSTWKGKIVRRQIRKQHKCAVIIQ, QHKCAVIIQSYYRMHVQQKKWDIMKKAARLIQ, TKAAIVIIQSAYRSMRVRKKIKEYNKAAVA, YNKAAVAIQSTYRAYKAKKNYATYRASAVLIQ, LKKTAVKIQAVFRGIRVRRRIQHMHTAATFIK, MHTAATFIKAMFKMHQAKVRYHKMRTAAVLIQ, ILKAVTVLQASFRGVRVRQTLRKMQNAAIRIQ, MQNAAIRIQSCYRRYRQQTYFNKLKKVTQT, LRHSAICIQAGFRGMKARRHLRMMHLAATLIQ, LQKAVITLQSSYRGWVVRKKMQEMHRAATVIQ, MHRAATVIQAAFRMHRAHVRYQAVRQASVVIQ, QRHSALILQAAFRSMKARRHLKMMHSSAVLIQ, MHSSAVLIQSRFRGLVVRKRFVSLKKAAVFVQ, VQKAVITIQSSYRRLMAKKKVQAMHRAAALIQ, QRHSALVIQAAYKGMKARQLLREKHRAAIIIQ, RTQAVICIQSSYRGFKVRKGIQRMHLAATLIQ, MHLAATLIQSLYRMHRAKLDYRAKKTAVVLIQ, LQKSVRIIQAAFRGMKVRQKLKNLSEAKMA, QKHAALRIQSFLQMAVYRRRFVQQKRAAVT, QKRAAVTLQQYFRTWQARKQFLLYRKAASVLQ, VRSSVIIIQARTRGFIQKRKFQKIKDSTIK, IKDSTIKIQAAWRSYKARKYLCKVKAACKIQA, KVKAACKIQAWYRSWKARKEYLAILKAVKVIQ, RHQAACLIQANFRRYKGRQVFLRQKSAALT, LKKSTVVLQALVRGWLVRKRISEQRTKIRLLH, QNRAASVIQKAVRRFLLRKKKEKINNGITK, and INNGITKIQALWRGYSWRKKNDGTKIKAIRLS.

It is found in the cytoplasm. The protein resides in the cytoskeleton. The protein localises to the spindle. It localises to the nucleus. Its function is as follows. Probable role in mitotic spindle regulation and coordination of mitotic processes. May have a preferential role in regulating neurogenesis. This chain is Abnormal spindle-like microcephaly-associated protein homolog (ASPM), found in Felis catus (Cat).